The following is a 348-amino-acid chain: Rhodopsin (348 aa).

Methionine 1 is subject to N-acetylmethionine. The Extracellular portion of the chain corresponds to 1–36 (MNGTEGPNFYVPFSNATGVVRSPFEYPQYYLAEPWQ). N-linked (GlcNAc...) asparagine glycosylation is found at asparagine 2 and asparagine 15. Residues 37–61 (FSMLAAYMFLLIVLGFPINFLTLYV) form a helical membrane-spanning segment. The Cytoplasmic portion of the chain corresponds to 62–73 (TVQHKKLRTPLN). A helical membrane pass occupies residues 74-96 (YILLNLAVADLFMVFGGFTTTLY). Residues 97–110 (TSLHGYFVFGPTGC) lie on the Extracellular side of the membrane. The cysteines at positions 110 and 187 are disulfide-linked. Residues 111 to 133 (NAEGFFATLGGEIALWSLVVLAI) traverse the membrane as a helical segment. Positions 134 to 136 (ERY) match the 'Ionic lock' involved in activated form stabilization motif. The Cytoplasmic portion of the chain corresponds to 134–152 (ERYVVVCKPMSNFRFGENH). A helical membrane pass occupies residues 153–173 (AIMGVAFTWVMALACAAPPLF). Over 174-202 (GWSRYIPEGLQCSCGIDYYTLKPEVNNES) the chain is Extracellular. Position 201 (glutamate 201) interacts with Zn(2+). The helical transmembrane segment at 203-224 (FVIYMFVVHFTIPMIVIFFCYG) threads the bilayer. Over 225 to 252 (QLVFTVKEARAQQQESATTQKAEKEVTR) the chain is Cytoplasmic. A helical membrane pass occupies residues 253–274 (MVIIMVIAFLICWVPYASVAFY). Over 275–286 (IFTHQGSNFGPI) the chain is Extracellular. Glutamine 279 contributes to the Zn(2+) binding site. Residues 287–308 (FMTIPAFFAKSASIYNPVIYIM) traverse the membrane as a helical segment. Lysine 296 carries the post-translational modification N6-(retinylidene)lysine. Residues 309–348 (MNKQFRNCMLTTICCGKNPLGDDEASATVSKTETSQVAPA) are Cytoplasmic-facing. Residues cysteine 322 and cysteine 323 are each lipidated (S-palmitoyl cysteine). The interaction with SAG stretch occupies residues 330 to 348 (DDEASATVSKTETSQVAPA). Serine 334 bears the Phosphoserine mark. Phosphothreonine is present on threonine 336. Phosphoserine is present on serine 338. Residues threonine 340 and threonine 342 each carry the phosphothreonine modification. Serine 343 is subject to Phosphoserine.

This sequence belongs to the G-protein coupled receptor 1 family. Opsin subfamily. As to quaternary structure, homodimer. May form a complex composed of RHO, GRK1 and RCVRN in a Ca(2+)-dependent manner; RCVRN prevents the interaction between GRK1 and RHO. Interacts with GRK1. Interacts (phosphorylated form) with SAG. Interacts with GNAT1. Interacts with GNAT3. SAG and G-proteins compete for a common binding site. Interacts with PRCD; the interaction promotes PRCD stability. Forms a complex with ASAP1 and ARF4. Forms a complex with ASAP1, RAB11A, Rabin8/RAB3IP, ARF4 and RAB11FIP3; the complex regulates Golgi-to-cilia rhodopsin/RHO transport in photoreceptors. Post-translationally, phosphorylated on some or all of the serine and threonine residues present in the C-terminal region. Contains one covalently linked retinal chromophore. Upon light absorption, the covalently bound 11-cis-retinal is converted to all-trans-retinal. After hydrolysis of the Schiff base and release of the covalently bound all-trans-retinal, active rhodopsin is regenerated by binding of a fresh molecule of 11-cis-retinal.

It is found in the membrane. Its subcellular location is the cell projection. It localises to the cilium. The protein resides in the photoreceptor outer segment. Its function is as follows. Photoreceptor required for image-forming vision at low light intensity. Required for photoreceptor cell viability after birth. Light-induced isomerization of 11-cis to all-trans retinal triggers a conformational change that activates signaling via G-proteins. Subsequent receptor phosphorylation mediates displacement of the bound G-protein alpha subunit by the arrestin SAG and terminates signaling. The sequence is that of Rhodopsin (RHO) from Macaca fascicularis (Crab-eating macaque).